Consider the following 339-residue polypeptide: Phenylalanine--tRNA ligase alpha subunit (339 aa).

Glu247 serves as a coordination point for Mg(2+).

Belongs to the class-II aminoacyl-tRNA synthetase family. Phe-tRNA synthetase alpha subunit type 1 subfamily. Tetramer of two alpha and two beta subunits. The cofactor is Mg(2+).

The protein localises to the cytoplasm. The enzyme catalyses tRNA(Phe) + L-phenylalanine + ATP = L-phenylalanyl-tRNA(Phe) + AMP + diphosphate + H(+). The polypeptide is Phenylalanine--tRNA ligase alpha subunit (Deinococcus geothermalis (strain DSM 11300 / CIP 105573 / AG-3a)).